The sequence spans 1254 residues: Structural polyprotein (1254 aa).

Residues 43–77 (LQAQQMQQLISAVSALTTKQNVKAPKGQRKQKQQK) form a host transcription inhibition region. Positions 60–112 (TKQNVKAPKGQRKQKQQKPKEKKEKQKKKPTXKKKQQQKPKPQAKKKKPGRRE) are disordered. The short motif at 70 to 108 (QRKQKQQKPKEKKEKQKKKPTXKKKQQQKPKPQAKKKKP) is the Nuclear localization signal element. Positions 84–110 (KQKKKPTXKKKQQQKPKPQAKKKKPGR) are enriched in basic residues. Residues 95–123 (QQQKPKPQAKKKKPGRRERMCMKIENDCI) are binding to the viral RNA. Positions 108 to 122 (PGRRERMCMKIENDC) are ribosome-binding. A disulfide bridge links cysteine 122 with cysteine 137. The Peptidase S3 domain maps to 122–270 (CIFEVKLDGK…RVTPEGTEEW (149 aa)). Catalysis depends on histidine 148, which acts as the Charge relay system. A Nuclear export signal motif is present at residues 153–163 (IDNPDLAKLTY). Residues 164 to 169 (KKSSKY) are interaction with spike glycoprotein E2. Aspartate 170 (charge relay system) is an active-site residue. Residues 192–202 (PEGHYNWHHGA) form a dimerization of the capsid protein region. The Charge relay system role is filled by serine 222. Residues 228 to 232 (DNKGR) form a dimerization of the capsid protein region. The Extracellular portion of the chain corresponds to 270-694 (WSAALMMCIL…PHEIIQYYYG (425 aa)). Residues 271-282 (SAALMMCILANT) form a functions as an uncleaved signal peptide for the precursor of protein E3/E2 region. Disulfide bonds link cysteine 277-cysteine 286, cysteine 291-cysteine 295, and cysteine 294-cysteine 326. N-linked (GlcNAc...) asparagine; by host glycosylation is present at asparagine 281. Residue asparagine 328 is glycosylated (N-linked (GlcNAc...) asparagine; by host). Intrachain disulfides connect cysteine 353/cysteine 459, cysteine 356/cysteine 362, cysteine 425/cysteine 439, cysteine 487/cysteine 599, cysteine 535/cysteine 559, and cysteine 537/cysteine 554. 2 interaction with host Mxra8 receptor regions span residues 360–363 (YFCY) and 396–398 (HAH). Residues 518-521 (TAGN) are interaction with host Mxra8 receptor. Asparagine 534 is a glycosylation site (N-linked (GlcNAc...) asparagine; by host). An interaction with host Mxra8 receptor region spans residues 550–556 (TINTCKI). N-linked (GlcNAc...) asparagine; by host glycosylation is present at asparagine 596. The helical transmembrane segment at 695–715 (LYPAATIAAVSGASLMALLTL) threads the bilayer. Residues 716–756 (AATCCMLATARRKCLTPYALTPGAVVPLTLGLLXCAPRANA) are Cytoplasmic-facing. The S-palmitoyl cysteine; by host moiety is linked to residue cysteine 719. An interaction with the capsid protein region spans residues 724-728 (TARRK). S-palmitoyl cysteine; by host attachment occurs at residues cysteine 729 and cysteine 750. Positions 729–749 (CLTPYALTPGAVVPLTLGLLX) are transient transmembrane before p62-6K protein processing. A disulfide bond links cysteine 729 and cysteine 750. The Extracellular portion of the chain corresponds to 757–771 (ASFAETMAYLWDENK). Residues 772-792 (TLFWMEXXXXXXALALLACCI) form a helical membrane-spanning segment. A topological domain (cytoplasmic) is located at residue lysine 793. Residues 794–814 (SLICCCKPFSFLVLLSLGASA) traverse the membrane as a helical segment. Over 815–1231 (KAYEHTATIP…AMTWVQRMAS (417 aa)) the chain is Extracellular. Intrachain disulfides connect cysteine 865–cysteine 930, cysteine 878–cysteine 910, cysteine 879–cysteine 912, and cysteine 884–cysteine 894. An E1 fusion peptide loop region spans residues 900-917 (VYPFMWGGAYCFCDSENT). A glycan (N-linked (GlcNAc...) asparagine; by host) is linked at asparagine 957. Disulfide bonds link cysteine 1075/cysteine 1087, cysteine 1117/cysteine 1192, cysteine 1122/cysteine 1196, and cysteine 1144/cysteine 1186. The helical transmembrane segment at 1232 to 1252 (GLGGLALIAVVVLVLVTCITM) threads the bilayer. Cysteine 1249 carries S-palmitoyl cysteine; by host lipidation. Cysteine 1249 carries S-stearoyl cysteine; by host lipidation. Residues 1253 to 1254 (RR) lie on the Cytoplasmic side of the membrane.

As to quaternary structure, homodimer. Homomultimer. Interacts with host karyopherin KPNA4; this interaction allows the nuclear import of the viral capsid protein. Interacts with spike glycoprotein E2. Interacts with host IRAK1; the interaction leads to inhibition of IRAK1-dependent signaling. In terms of assembly, the precursor of protein E3/E2 and E1 form a heterodimer shortly after synthesis. The precursor of protein E3/E2 and E1 form a heterodimer shortly after synthesis. Processing of the precursor of protein E3/E2 into E2 and E3 results in a heterodimer of the spike glycoproteins E2 and E1. Spike at virion surface are constituted of a trimer of E2-E1 heterodimers. After target cell attachment and endocytosis, E1 change conformation to form homotrimers. Interacts with 6K protein. As to quaternary structure, interacts with spike glycoprotein E1. Processing of the precursor of protein E3/E2 into E2 and E3 results in a heterodimer of the spike glycoproteins E2 and E1. Spike at virion surface are constituted of a trimer of E2-E1 heterodimers. Interacts with 6K protein. Interacts with host MXRA8; this interaction mediates virus entry. In terms of processing, structural polyprotein: Specific enzymatic cleavages in vivo yield mature proteins. Capsid protein is auto-cleaved during polyprotein translation, unmasking a signal peptide at the N-terminus of the precursor of E3/E2. The remaining polyprotein is then targeted to the host endoplasmic reticulum, where host signal peptidase cleaves it into pE2, 6K and E1 proteins. pE2 is further processed to mature E3 and E2 by host furin in trans-Golgi vesicle. Post-translationally, palmitoylated via thioester bonds. These palmitoylations may induce disruption of the C-terminus transmembrane. This would result in the reorientation of E2 C-terminus from lumenal to cytoplasmic side. N-glycosylated. In terms of processing, palmitoylated via thioester bonds.

The protein localises to the virion. The protein resides in the host cytoplasm. It is found in the host cell membrane. Its subcellular location is the host nucleus. It localises to the virion membrane. The protein localises to the host Golgi apparatus. The protein resides in the host trans-Golgi network. It is found in the host endoplasmic reticulum. It carries out the reaction Autocatalytic release of the core protein from the N-terminus of the togavirus structural polyprotein by hydrolysis of a -Trp-|-Ser- bond.. Forms an icosahedral capsid with a T=4 symmetry composed of 240 copies of the capsid protein surrounded by a lipid membrane through which penetrate 80 spikes composed of trimers of E1-E2 heterodimers. The capsid protein binds to the viral RNA genome at a site adjacent to a ribosome binding site for viral genome translation following genome release. Possesses a protease activity that results in its autocatalytic cleavage from the nascent structural protein. Following its self-cleavage, the capsid protein transiently associates with ribosomes, and within several minutes the protein binds to viral RNA and rapidly assembles into icosahedric core particles. The resulting nucleocapsid eventually associates with the cytoplasmic domain of the spike glycoprotein E2 at the cell membrane, leading to budding and formation of mature virions. In case of infection, new virions attach to target cells and after clathrin-mediated endocytosis their membrane fuses with the host endosomal membrane. This leads to the release of the nucleocapsid into the cytoplasm, followed by an uncoating event necessary for the genomic RNA to become accessible. The uncoating might be triggered by the interaction of capsid proteins with ribosomes. Binding of ribosomes would release the genomic RNA since the same region is genomic RNA-binding and ribosome-binding. Specifically inhibits interleukin-1 receptor-associated kinase 1/IRAK1-dependent signaling during viral entry, representing a means by which the alphaviruses may evade innate immune detection and activation prior to viral gene expression. In terms of biological role, provides the signal sequence for the translocation of the precursor of protein E3/E2 to the host endoplasmic reticulum. Furin-cleaved E3 remains associated with spike glycoprotein E1 and mediates pH protection of the latter during the transport via the secretory pathway. After virion release from the host cell, the assembly protein E3 is gradually released in the extracellular space. Its function is as follows. Plays a role in viral attachment to target host cell, by binding to the cell receptor MXRA8. The host LDLR may also act as a cell receptor for viral entry. Synthesized as a p62 precursor which is processed by furin at the cell membrane just before virion budding, giving rise to E2-E1 heterodimer. The p62-E1 heterodimer is stable, whereas E2-E1 is unstable and dissociate at low pH. p62 is processed at the last step, presumably to avoid E1 fusion activation before its final export to cell surface. E2 C-terminus contains a transitory transmembrane that would be disrupted by palmitoylation, resulting in reorientation of the C-terminal tail from lumenal to cytoplasmic side. This step is critical since E2 C-terminus is involved in budding by interacting with capsid proteins. This release of E2 C-terminus in cytoplasm occurs lately in protein export, and precludes premature assembly of particles at the endoplasmic reticulum membrane. Functionally, acts as a viroporin that participates in virus glycoprotein processing and transport to the plasma membrane, cell permeabilization and budding of viral particles. The cation channel is permeable to Na(+)&gt;K(+)&gt;Ca(2+) in vitro. Disrupts the calcium homeostasis of the cell, probably at the endoplasmic reticulum level. This leads to cytoplasmic calcium elevation. Because of its lipophilic properties, the 6K protein is postulated to influence the selection of lipids that interact with the transmembrane domains of the glycoproteins, which, in turn, affects the deformability of the bilayer required for the extreme curvature that occurs as budding proceeds. Present in low amount in virions, about 3% compared to viral glycoproteins. Class II viral fusion protein. Fusion activity is inactive as long as E1 is bound to E2 in mature virion. After virus attachment to target cell via host MXRA8 and endocytosis, acidification of the endosome induce dissociation of E1/E2 heterodimer and concomitant trimerization of the E1 subunits. This E1 trimer is fusion active, and promotes release of viral nucleocapsid in cytoplasm after endosome and viral membrane fusion. Efficient fusion requires the presence of cholesterol and sphingolipid in the target membrane. The polypeptide is Structural polyprotein (Ross river virus (strain NB5092) (RRV)).